A 181-amino-acid polypeptide reads, in one-letter code: Probable mitochondrial import inner membrane translocase subunit tim-17B.1 (181 aa).

3 helical membrane-spanning segments follow: residues 17–37 (IGSA…FGGY), 61–81 (GVQF…LVAI), and 109–129 (VMAG…GVGL). The disordered stretch occupies residues 137–181 (AMMDPTQPPPEALDDPRSLGQKSQAEPGLDQTRPFGIPTGLPNLS).

This sequence belongs to the Tim17/Tim22/Tim23 family.

The protein resides in the mitochondrion inner membrane. Its function is as follows. Essential component of the TIM23 complex, a complex that mediates the translocation of transit peptide-containing proteins across the mitochondrial inner membrane. This is Probable mitochondrial import inner membrane translocase subunit tim-17B.1 from Caenorhabditis elegans.